The chain runs to 353 residues: Tetraacyldisaccharide 4'-kinase (353 aa).

66 to 73 contributes to the ATP binding site; sequence TVGGTGKT.

It belongs to the LpxK family.

It carries out the reaction a lipid A disaccharide + ATP = a lipid IVA + ADP + H(+). Its pathway is glycolipid biosynthesis; lipid IV(A) biosynthesis; lipid IV(A) from (3R)-3-hydroxytetradecanoyl-[acyl-carrier-protein] and UDP-N-acetyl-alpha-D-glucosamine: step 6/6. In terms of biological role, transfers the gamma-phosphate of ATP to the 4'-position of a tetraacyldisaccharide 1-phosphate intermediate (termed DS-1-P) to form tetraacyldisaccharide 1,4'-bis-phosphate (lipid IVA). The chain is Tetraacyldisaccharide 4'-kinase from Geobacter sulfurreducens (strain ATCC 51573 / DSM 12127 / PCA).